Consider the following 208-residue polypeptide: Small ribosomal subunit protein uS4 (208 aa).

In terms of domain architecture, S4 RNA-binding spans 95 to 157; the sequence is RRIDNVVYRA…DSLKKLIRSN (63 aa).

The protein belongs to the universal ribosomal protein uS4 family. Part of the 30S ribosomal subunit. Contacts protein S5. The interaction surface between S4 and S5 is involved in control of translational fidelity.

One of the primary rRNA binding proteins, it binds directly to 16S rRNA where it nucleates assembly of the body of the 30S subunit. In terms of biological role, with S5 and S12 plays an important role in translational accuracy. This is Small ribosomal subunit protein uS4 from Borreliella burgdorferi (strain ATCC 35210 / DSM 4680 / CIP 102532 / B31) (Borrelia burgdorferi).